Here is a 170-residue protein sequence, read N- to C-terminus: Large ribosomal subunit protein uL10 (170 aa).

Belongs to the universal ribosomal protein uL10 family. In terms of assembly, part of the ribosomal stalk of the 50S ribosomal subunit. The N-terminus interacts with L11 and the large rRNA to form the base of the stalk. The C-terminus forms an elongated spine to which L12 dimers bind in a sequential fashion forming a multimeric L10(L12)X complex.

Its function is as follows. Forms part of the ribosomal stalk, playing a central role in the interaction of the ribosome with GTP-bound translation factors. The protein is Large ribosomal subunit protein uL10 of Lactobacillus helveticus (strain DPC 4571).